The following is a 253-amino-acid chain: Sec-independent protein translocase protein TatC (253 aa).

5 consecutive transmembrane segments (helical) span residues isoleucine 19 to proline 39, phenylalanine 70 to phenylalanine 90, isoleucine 109 to leucine 129, phenylalanine 154 to phenylalanine 174, and phenylalanine 194 to methionine 214.

This sequence belongs to the TatC family. Forms a complex with TatA.

The protein resides in the cell membrane. Functionally, part of the twin-arginine translocation (Tat) system that transports large folded proteins containing a characteristic twin-arginine motif in their signal peptide across membranes. This Halalkalibacterium halodurans (strain ATCC BAA-125 / DSM 18197 / FERM 7344 / JCM 9153 / C-125) (Bacillus halodurans) protein is Sec-independent protein translocase protein TatC.